A 308-amino-acid chain; its full sequence is Ribosomal RNA large subunit methyltransferase F (308 aa).

This sequence belongs to the methyltransferase superfamily. METTL16/RlmF family.

The protein resides in the cytoplasm. The enzyme catalyses adenosine(1618) in 23S rRNA + S-adenosyl-L-methionine = N(6)-methyladenosine(1618) in 23S rRNA + S-adenosyl-L-homocysteine + H(+). In terms of biological role, specifically methylates the adenine in position 1618 of 23S rRNA. This is Ribosomal RNA large subunit methyltransferase F from Salmonella paratyphi A (strain ATCC 9150 / SARB42).